The sequence spans 254 residues: Urease accessory protein UreF (254 aa).

Over residues 1–11 (MDKGKSVKSTE) the composition is skewed to basic and acidic residues. Residues 1–25 (MDKGKSVKSTEKSVGIPPKTPKTDN) form a disordered region.

Belongs to the UreF family. UreH, UreF and UreG form a complex that acts as a GTP-hydrolysis-dependent molecular chaperone, activating the urease apoprotein by helping to assemble the nickel containing metallocenter of UreC. The UreE protein probably delivers the nickel.

It localises to the cytoplasm. Its function is as follows. Required for maturation of urease via the functional incorporation of the urease nickel metallocenter. The chain is Urease accessory protein UreF from Helicobacter pylori (strain P12).